The following is a 213-amino-acid chain: Proteasome subunit beta (213 aa).

Positions 1-11 (MPEQYQESMTG) are cleaved as a propeptide — removed in mature form; by autocatalysis. Thr12 (nucleophile) is an active-site residue.

The protein belongs to the peptidase T1B family. In terms of assembly, the 20S proteasome core is composed of 14 alpha and 14 beta subunits that assemble into four stacked heptameric rings, resulting in a barrel-shaped structure. The two inner rings, each composed of seven catalytic beta subunits, are sandwiched by two outer rings, each composed of seven alpha subunits. The catalytic chamber with the active sites is on the inside of the barrel. Has a gated structure, the ends of the cylinder being occluded by the N-termini of the alpha-subunits. Is capped at one or both ends by the proteasome regulatory ATPase, PAN.

The protein localises to the cytoplasm. The catalysed reaction is Cleavage of peptide bonds with very broad specificity.. The formation of the proteasomal ATPase PAN-20S proteasome complex, via the docking of the C-termini of PAN into the intersubunit pockets in the alpha-rings, triggers opening of the gate for substrate entry. Interconversion between the open-gate and close-gate conformations leads to a dynamic regulation of the 20S proteasome proteolysis activity. Its function is as follows. Component of the proteasome core, a large protease complex with broad specificity involved in protein degradation. The polypeptide is Proteasome subunit beta (Methanoregula boonei (strain DSM 21154 / JCM 14090 / 6A8)).